Reading from the N-terminus, the 278-residue chain is Urease accessory protein UreD (278 aa).

This sequence belongs to the UreD family. UreD, UreF and UreG form a complex that acts as a GTP-hydrolysis-dependent molecular chaperone, activating the urease apoprotein by helping to assemble the nickel containing metallocenter of UreC. The UreE protein probably delivers the nickel.

The protein resides in the cytoplasm. Its function is as follows. Required for maturation of urease via the functional incorporation of the urease nickel metallocenter. This Blochmanniella pennsylvanica (strain BPEN) protein is Urease accessory protein UreD.